Consider the following 163-residue polypeptide: Lipoprotein signal peptidase (163 aa).

3 helical membrane-spanning segments follow: residues 3-23, 70-90, and 94-114; these read IPLIYNRILILFFFIANIIIL, NYILCLISSIAILIILKTMYN, and IENFFYNIPSAFIISGAIGNF. Active-site residues include Asp-125 and Asp-143. Residues 134-154 traverse the membrane as a helical segment; the sequence is WHFATFNIADVSIFIGSVLFI.

It belongs to the peptidase A8 family.

The protein resides in the cell membrane. The enzyme catalyses Release of signal peptides from bacterial membrane prolipoproteins. Hydrolyzes -Xaa-Yaa-Zaa-|-(S,diacylglyceryl)Cys-, in which Xaa is hydrophobic (preferably Leu), and Yaa (Ala or Ser) and Zaa (Gly or Ala) have small, neutral side chains.. It functions in the pathway protein modification; lipoprotein biosynthesis (signal peptide cleavage). This protein specifically catalyzes the removal of signal peptides from prolipoproteins. This is Lipoprotein signal peptidase from Buchnera aphidicola subsp. Baizongia pistaciae (strain Bp).